The sequence spans 121 residues: Large ribosomal subunit protein uL22c (121 aa).

It belongs to the universal ribosomal protein uL22 family. As to quaternary structure, part of the 50S ribosomal subunit.

The protein localises to the plastid. Its subcellular location is the chloroplast. In terms of biological role, this protein binds specifically to 23S rRNA. Its function is as follows. The globular domain of the protein is located near the polypeptide exit tunnel on the outside of the subunit, while an extended beta-hairpin is found that lines the wall of the exit tunnel in the center of the 70S ribosome. In Welwitschia mirabilis (Tree tumbo), this protein is Large ribosomal subunit protein uL22c (rpl22).